The following is a 366-amino-acid chain: S-adenosylmethionine:tRNA ribosyltransferase-isomerase (366 aa).

Belongs to the QueA family. Monomer.

The protein localises to the cytoplasm. It carries out the reaction 7-aminomethyl-7-carbaguanosine(34) in tRNA + S-adenosyl-L-methionine = epoxyqueuosine(34) in tRNA + adenine + L-methionine + 2 H(+). The protein operates within tRNA modification; tRNA-queuosine biosynthesis. In terms of biological role, transfers and isomerizes the ribose moiety from AdoMet to the 7-aminomethyl group of 7-deazaguanine (preQ1-tRNA) to give epoxyqueuosine (oQ-tRNA). In Caulobacter vibrioides (strain ATCC 19089 / CIP 103742 / CB 15) (Caulobacter crescentus), this protein is S-adenosylmethionine:tRNA ribosyltransferase-isomerase.